A 166-amino-acid chain; its full sequence is Regulator of ribonuclease activity A (166 aa).

It belongs to the RraA family. In terms of assembly, homotrimer. Binds to both RNA-binding sites in the C-terminal region of Rne and to RhlB.

The protein resides in the cytoplasm. Globally modulates RNA abundance by binding to RNase E (Rne) and regulating its endonucleolytic activity. Can modulate Rne action in a substrate-dependent manner by altering the composition of the degradosome. Modulates RNA-binding and helicase activities of the degradosome. The sequence is that of Regulator of ribonuclease activity A from Actinobacillus succinogenes (strain ATCC 55618 / DSM 22257 / CCUG 43843 / 130Z).